Reading from the N-terminus, the 390-residue chain is MFFSRKIRSLLLTPKRRWSLILTLCLIFTGINFSTSNDVQASRIKDIAQLHGVRSNQLIGYGLITGLNGTGDDMKKSAFTLQAIYNMMTRSGITLNPSEMKSIKIKNVAAVMVTASLPPFASSGSKIDIQVSSMGDAKSLAGGTLLMTPLKGVDNRVYAIAQGPLAIGAFSFGGKSAQAQKNHPNAGRIPDGATVEDTVLVDIGADGTLTYQLANADFTTANNMTRAINKKFGKDTAYPLDSGSVTINIPPHFSKRVVQFVANVESIDITADSVARVVVNERTGTVVMGQNVRLSTVAVSHGNLNLIIRESFDVSQPAPLADGETVITPSTEISVTEEEGQLVVLNMKNDVSIGEIANALNAIGATPRDLIAIFQAIKAAGAMHGELIVL.

The signal sequence occupies residues 1–36; sequence MFFSRKIRSLLLTPKRRWSLILTLCLIFTGINFSTS.

Belongs to the FlgI family. As to quaternary structure, the basal body constitutes a major portion of the flagellar organelle and consists of four rings (L,P,S, and M) mounted on a central rod.

It is found in the periplasm. It localises to the bacterial flagellum basal body. Functionally, assembles around the rod to form the L-ring and probably protects the motor/basal body from shearing forces during rotation. This is Flagellar P-ring protein from Desulfotalea psychrophila (strain LSv54 / DSM 12343).